A 360-amino-acid polypeptide reads, in one-letter code: MALPSSSWSEFLPELLNTVFHNLNDARDILNCATVCSSWKDSSSAVYYSRTFSPFLFISHLSSNEEIRFSDQFRVLSPGKLGFSGNQQAWVCGSTLGFLLTKPVTKSVTSLPPLISFEDVQRLLQSQAIIPDSEALKNFIKKAVSSTSLLDDEWVVLVIYNTDRKLAFCRRGDKQWTDLESVASSVDDIVFCNGVFFAIDRLGEIYHCELSANNPKATPLCSTSPFRYDSCKKYLAESDYDELWVVLKKLELNDDCDFETSFEIYEFNRETNEWTKVMSLRGKALFLSPQGRCIAVLAGERGFFKDNSVYFIDGDDPSVGGSGPQNLSVFEWESKQIMKIYQPRSWNCQMFWVTPTDVPQ.

In terms of domain architecture, F-box spans 6-54 (SSWSEFLPELLNTVFHNLNDARDILNCATVCSSWKDSSSAVYYSRTFSP).

The sequence is that of Putative F-box protein At5g55150 from Arabidopsis thaliana (Mouse-ear cress).